We begin with the raw amino-acid sequence, 639 residues long: Tubulin--tyrosine ligase-like protein 12 (639 aa).

Residues 295 to 639 (PQGHVFRVHC…TDNCHVTRII (345 aa)) enclose the TTL domain. Residues 445–448 (SKYI), lysine 463, and aspartate 465 each bind ATP.

This sequence belongs to the tubulin--tyrosine ligase family. Interacts with MAVS; the interaction prevents MAVS binding to TBK1 and IKBKE. Interacts (via N-terminus) with TBK1 (via protein kinase domain). Interacts (via TTL domain) with IKBKE (via protein kinase domain). Interacts with tubulin alpha. Interacts with histone H3 and histone H4 (when trimethylated at 'Lys-20' (H4K20me3)). Interacts with CBX3. In terms of tissue distribution, widely expressed with highest levels in brain, kidney, liver, lung, muscle and testis.

The protein resides in the cytoplasm. Its subcellular location is the midbody. The protein localises to the cytoskeleton. It is found in the microtubule organizing center. It localises to the centrosome. The protein resides in the spindle. Its subcellular location is the nucleus. Negatively regulates post-translational modifications of tubulin, including detyrosination of the C-terminus and polyglutamylation of glutamate residues. Also, indirectly promotes histone H4 trimethylation at 'Lys-20' (H4K20me3). Probably by controlling tubulin and/or histone H4 post-translational modifications, plays a role in mitosis and in maintaining chromosome number stability. During RNA virus-mediated infection, acts as a negative regulator of the RIG-I pathway by preventing MAVS binding to TBK1 and IKBKE. The chain is Tubulin--tyrosine ligase-like protein 12 from Mus musculus (Mouse).